Reading from the N-terminus, the 351-residue chain is V-type proton ATPase subunit d2 (351 aa).

Belongs to the V-ATPase V0D/AC39 subunit family. As to quaternary structure, V-ATPase is a heteromultimeric enzyme composed of a peripheral catalytic V1 complex (components A to H) attached to an integral membrane V0 proton pore complex (components: a, c, c'', d and e).

It is found in the vacuole membrane. Subunit of the integral membrane V0 complex of vacuolar ATPase. Vacuolar ATPase is responsible for acidifying a variety of intracellular compartments in eukaryotic cells, thus providing most of the energy required for transport processes in the vacuolar system. The polypeptide is V-type proton ATPase subunit d2 (VHA-d2) (Arabidopsis thaliana (Mouse-ear cress)).